The chain runs to 629 residues: Glutamyl-tRNA(Gln) amidotransferase subunit E (629 aa).

Positions 405 to 426 are disordered; that stretch reads PEETRRALPDGNTQYMRPLPGK.

Belongs to the GatB/GatE family. GatE subfamily. As to quaternary structure, heterodimer of GatD and GatE.

The enzyme catalyses L-glutamyl-tRNA(Gln) + L-glutamine + ATP + H2O = L-glutaminyl-tRNA(Gln) + L-glutamate + ADP + phosphate + H(+). Allows the formation of correctly charged Gln-tRNA(Gln) through the transamidation of misacylated Glu-tRNA(Gln) in organisms which lack glutaminyl-tRNA synthetase. The reaction takes place in the presence of glutamine and ATP through an activated gamma-phospho-Glu-tRNA(Gln). The GatDE system is specific for glutamate and does not act on aspartate. In Thermococcus sibiricus (strain DSM 12597 / MM 739), this protein is Glutamyl-tRNA(Gln) amidotransferase subunit E.